A 188-amino-acid polypeptide reads, in one-letter code: Protein GrpE (188 aa).

Positions 1–24 are disordered; sequence MSDENKPGEAAELDAGVAPEAQPE.

The protein belongs to the GrpE family. In terms of assembly, homodimer.

It localises to the cytoplasm. Its function is as follows. Participates actively in the response to hyperosmotic and heat shock by preventing the aggregation of stress-denatured proteins, in association with DnaK and GrpE. It is the nucleotide exchange factor for DnaK and may function as a thermosensor. Unfolded proteins bind initially to DnaJ; upon interaction with the DnaJ-bound protein, DnaK hydrolyzes its bound ATP, resulting in the formation of a stable complex. GrpE releases ADP from DnaK; ATP binding to DnaK triggers the release of the substrate protein, thus completing the reaction cycle. Several rounds of ATP-dependent interactions between DnaJ, DnaK and GrpE are required for fully efficient folding. The sequence is that of Protein GrpE from Hyphomonas neptunium (strain ATCC 15444).